A 300-amino-acid polypeptide reads, in one-letter code: MEKFTRWRDPGTGIAPFHPINTETPSGFNFKWILIVVVMILRVPLCIISVTLWFLWSCFLKPILSIQPKLSFFIDSSLSRLLLLCFGCLKLSKSTSGSFVQGDSLQPGDILAVNHSSPLDVLVLSCLYNCTFAVCDSKTSNVSIISAQAYFWSCFFSPSKLKITDAKPLAKVAAKASKIGTVVILFPEGVCTNGRALCQFTPCFDSAKETDRIFPLYIKYLPPCVTLPVPSLLSFARSVLLTVSFEIRIRFSAEPLIPRNCTDVTESAQEVLSKLGRSRVVKLGKSDKLSYLDARSKKHV.

The chain crosses the membrane as a helical span at residues 32-52 (WILIVVVMILRVPLCIISVTL). The short motif at 115–120 (HSSPLD) is the HXXXXD motif element.

This sequence belongs to the 1-acyl-sn-glycerol-3-phosphate acyltransferase family.

It localises to the lipid droplet. The protein localises to the endoplasmic reticulum membrane. The protein resides in the golgi apparatus membrane. The catalysed reaction is a 1-acyl-sn-glycero-3-phosphate + an acyl-CoA = a 1,2-diacyl-sn-glycero-3-phosphate + CoA. Functionally, acyl-CoA-dependent lysophosphatidic acid acyltransferase with preference for oleoyl-CoA. Involved in triacylglyceride homeostasis and lipid droplet formation. Involved in vacuolar protein sorting. In Schizosaccharomyces pombe (strain 972 / ATCC 24843) (Fission yeast), this protein is Putative lysophosphatidic acid:oleoyl-CoA acyltransferase (vps66).